Reading from the N-terminus, the 417-residue chain is Serine/threonine-protein phosphatase 4 regulatory subunit 2 (417 aa).

Composition is skewed to polar residues over residues 140 to 149, 158 to 170, and 186 to 196; these read EKNNSNSLNR, NSPS…NING, and APMTTNGLPES. The segment at 140-417 is disordered; it reads EKNNSNSLNR…EVTDEPMEQD (278 aa). A Phosphoserine modification is found at serine 159. Positions 197–213 are enriched in basic and acidic residues; that stretch reads TDSKEANLQQNEEKNHS. The span at 214–226 shows a compositional bias: low complexity; it reads DSSTSESEVSSVS. Serine 226 is subject to Phosphoserine. Over residues 231–258 the composition is skewed to basic and acidic residues; it reads KHPDEDAVEAEGHEVKRLRFDKEGEVRE. A compositionally biased stretch (polar residues) spans 259–269; that stretch reads TASQTTSSEIS. A compositionally biased stretch (basic and acidic residues) spans 283-297; the sequence is QDKDKDSRCTRQHCT. A compositionally biased stretch (acidic residues) spans 298 to 311; it reads EEDEEEDEEEEEES. Residues 318-327 are compositionally biased toward basic and acidic residues; it reads MIPERKNQEK. The span at 338–350 shows a compositional bias: acidic residues; the sequence is ETSEENNQMEESD. Basic and acidic residues predominate over residues 353–363; the sequence is QAEKDLLHSEG. Low complexity predominate over residues 366-375; sequence NEGPVSSSSS. Polar residues predominate over residues 385–399; that stretch reads GSNSSKTGEILSESS. The span at 400–417 shows a compositional bias: acidic residues; that stretch reads MENDDEATEVTDEPMEQD.

Belongs to the PPP4R2 family. As to quaternary structure, serine/threonine-protein phosphatase 4 (PP4) occurs in different assemblies of the catalytic and one or more regulatory subunits. Component of the PP4 complexes PPP4C-PPP4R2, PPP4C-PPP4R2-PPP4R3A and PPP4C-PPP4R2-PPP4R3B. The PPP4C-PPP4R2 complex appears to be a tetramer composed of 2 molecules of PPP4C and 2 molecules of PPP4R2. Interacts with DDX20/GEMIN3 and GEMIN4. Interacts with RPA2; this DNA damage-dependent interaction recruits PPP4C leading to RPA2 dephosphorylation. As to expression, widely expressed.

It is found in the cytoplasm. The protein resides in the cytoskeleton. It localises to the microtubule organizing center. Its subcellular location is the centrosome. The protein localises to the nucleus. Its function is as follows. Regulatory subunit of serine/threonine-protein phosphatase 4 (PP4). May regulate the activity of PPP4C at centrosomal microtubule organizing centers. Its interaction with the SMN complex leads to enhance the temporal localization of snRNPs, suggesting a role of PPP4C in maturation of spliceosomal snRNPs. The PPP4C-PPP4R2-PPP4R3A PP4 complex specifically dephosphorylates H2AX phosphorylated on 'Ser-140' (gamma-H2AX) generated during DNA replication and required for DNA double strand break repair. Mediates RPA2 dephosphorylation by recruiting PPP4C to RPA2 in a DNA damage-dependent manner. RPA2 dephosphorylation is required for the efficient RPA2-mediated recruitment of RAD51 to chromatin following double strand breaks, an essential step for DNA repair. This is Serine/threonine-protein phosphatase 4 regulatory subunit 2 (PPP4R2) from Homo sapiens (Human).